Here is a 386-residue protein sequence, read N- to C-terminus: S-adenosylmethionine synthase (386 aa).

An ATP-binding site is contributed by His-16. A Mg(2+)-binding site is contributed by Asp-18. Position 44 (Glu-44) interacts with K(+). Residues Glu-57 and Gln-100 each coordinate L-methionine. The segment at 100 to 110 (QSPDINQGVDR) is flexible loop. ATP-binding positions include 164-166 (DGK), 230-231 (KF), Asp-239, 245-246 (RK), Ala-262, and Lys-266. An L-methionine-binding site is contributed by Asp-239. Lys-270 provides a ligand contact to L-methionine.

This sequence belongs to the AdoMet synthase family. In terms of assembly, homotetramer; dimer of dimers. Requires Mg(2+) as cofactor. K(+) serves as cofactor.

The protein localises to the cytoplasm. It carries out the reaction L-methionine + ATP + H2O = S-adenosyl-L-methionine + phosphate + diphosphate. It functions in the pathway amino-acid biosynthesis; S-adenosyl-L-methionine biosynthesis; S-adenosyl-L-methionine from L-methionine: step 1/1. Functionally, catalyzes the formation of S-adenosylmethionine (AdoMet) from methionine and ATP. The overall synthetic reaction is composed of two sequential steps, AdoMet formation and the subsequent tripolyphosphate hydrolysis which occurs prior to release of AdoMet from the enzyme. The protein is S-adenosylmethionine synthase of Wolinella succinogenes (strain ATCC 29543 / DSM 1740 / CCUG 13145 / JCM 31913 / LMG 7466 / NCTC 11488 / FDC 602W) (Vibrio succinogenes).